We begin with the raw amino-acid sequence, 359 residues long: Ras association domain-containing protein 7 (359 aa).

The Ras-associating domain occupies 6–89 (VAMELKVWVD…VQFVLRRTGP (84 aa)). The segment at 87 to 123 (TGPSLSGRPSSDNCPPPERCPVRASLPPKPSAIPGRE) is disordered. Polar residues predominate over residues 89–99 (PSLSGRPSSDN). Coiled coils occupy residues 180–208 (WEQE…TAEH) and 242–301 (AAER…QQFI). The disordered stretch occupies residues 339-359 (SHILVSSLSPEVPPMRQSSWR).

In terms of assembly, interacts with MAP2K7 and GTP-bound NRAS. Polyubiquitinated and degraded by the proteasome upon prolonged stress stimuli.

It is found in the cytoplasm. Its subcellular location is the cytoskeleton. The protein resides in the microtubule organizing center. The protein localises to the centrosome. Functionally, negatively regulates stress-induced JNK activation and apoptosis by promoting MAP2K7 phosphorylation and inhibiting its ability to activate JNK. Following prolonged stress, anti-apoptotic effect stops because of degradation of RASSF7 protein via the ubiquitin-proteasome pathway. Required for the activation of AURKB and chromosomal congression during mitosis where it stimulates microtubule polymerization. This chain is Ras association domain-containing protein 7 (Rassf7), found in Mus musculus (Mouse).